The sequence spans 791 residues: Phosphoenolpyruvate synthase (791 aa).

The residue at position 416 (T416) is a Phosphothreonine. The active-site Tele-phosphohistidine intermediate is H418. Residues R508, R575, E677, G698, S699, N700, and D701 each coordinate substrate. E677 contacts Mg(2+). Position 701 (D701) interacts with Mg(2+). Y744 carries the phosphotyrosine modification. C748 (proton donor) is an active-site residue.

It belongs to the PEP-utilizing enzyme family. The cofactor is Mg(2+).

The catalysed reaction is pyruvate + ATP + H2O = phosphoenolpyruvate + AMP + phosphate + 2 H(+). Its pathway is carbohydrate biosynthesis; gluconeogenesis. In terms of biological role, catalyzes the phosphorylation of pyruvate to phosphoenolpyruvate. The protein is Phosphoenolpyruvate synthase (ppsA) of Pseudomonas aeruginosa (strain UCBPP-PA14).